The following is a 364-amino-acid chain: tRNA 2-selenouridine synthase (364 aa).

The 124-residue stretch at 14–137 (LIADTPIIDV…LRQAAIQATI (124 aa)) folds into the Rhodanese domain. The S-selanylcysteine intermediate role is filled by Cys-97.

The protein belongs to the SelU family. Monomer.

The catalysed reaction is 5-methylaminomethyl-2-thiouridine(34) in tRNA + selenophosphate + (2E)-geranyl diphosphate + H2O + H(+) = 5-methylaminomethyl-2-selenouridine(34) in tRNA + (2E)-thiogeraniol + phosphate + diphosphate. It catalyses the reaction 5-methylaminomethyl-2-thiouridine(34) in tRNA + (2E)-geranyl diphosphate = 5-methylaminomethyl-S-(2E)-geranyl-thiouridine(34) in tRNA + diphosphate. The enzyme catalyses 5-methylaminomethyl-S-(2E)-geranyl-thiouridine(34) in tRNA + selenophosphate + H(+) = 5-methylaminomethyl-2-(Se-phospho)selenouridine(34) in tRNA + (2E)-thiogeraniol. It carries out the reaction 5-methylaminomethyl-2-(Se-phospho)selenouridine(34) in tRNA + H2O = 5-methylaminomethyl-2-selenouridine(34) in tRNA + phosphate. Involved in the post-transcriptional modification of the uridine at the wobble position (U34) of tRNA(Lys), tRNA(Glu) and tRNA(Gln). Catalyzes the conversion of 2-thiouridine (S2U-RNA) to 2-selenouridine (Se2U-RNA). Acts in a two-step process involving geranylation of 2-thiouridine (S2U) to S-geranyl-2-thiouridine (geS2U) and subsequent selenation of the latter derivative to 2-selenouridine (Se2U) in the tRNA chain. In Shigella sonnei (strain Ss046), this protein is tRNA 2-selenouridine synthase.